The chain runs to 276 residues: Large ribosomal subunit protein uL2 (276 aa).

Disordered regions lie at residues 1–20 (MGIKKYNPTTNGRRNMTTND) and 219–276 (TVRG…RRKK). Residues 7 to 20 (NPTTNGRRNMTTND) are compositionally biased toward polar residues.

It belongs to the universal ribosomal protein uL2 family. As to quaternary structure, part of the 50S ribosomal subunit. Forms a bridge to the 30S subunit in the 70S ribosome.

One of the primary rRNA binding proteins. Required for association of the 30S and 50S subunits to form the 70S ribosome, for tRNA binding and peptide bond formation. It has been suggested to have peptidyltransferase activity; this is somewhat controversial. Makes several contacts with the 16S rRNA in the 70S ribosome. The polypeptide is Large ribosomal subunit protein uL2 (Bacillus cereus (strain Q1)).